A 412-amino-acid polypeptide reads, in one-letter code: Eukaryotic initiation factor 4A-2 (412 aa).

Alanine 2 carries the N-acetylalanine modification. The short motif at 39-67 (ESFDAMGLQENLLRGIYAYGFEKPSAIQQ) is the Q motif element. Positions 70–240 (IVPFCKGLDV…RKFMSKPVRI (171 aa)) constitute a Helicase ATP-binding domain. ATP is bound at residue 83-90 (AQSGTGKT). Threonine 145 carries the post-translational modification Phosphothreonine. A DEAD box motif is present at residues 188-191 (DEAD). The 162-residue stretch at 251 to 412 (GIKQFYVNVE…ELPSNVADLL (162 aa)) folds into the Helicase C-terminal domain.

It belongs to the DEAD box helicase family. eIF4A subfamily. As to quaternary structure, eIF4F is a multi-subunit complex, the composition of which varies with external and internal environmental conditions. It is composed of at least EIF4A, EIF4E and EIF4G. Ubiquitous. Preferentially expressed in flowers, young leaves and roots.

The protein localises to the cytoplasm. The enzyme catalyses ATP + H2O = ADP + phosphate + H(+). Its function is as follows. ATP-dependent RNA helicase which is a subunit of the eIF4F complex involved in cap recognition and is required for mRNA binding to ribosome. In the current model of translation initiation, eIF4A unwinds RNA secondary structures in the 5'-UTR of mRNAs which is necessary to allow efficient binding of the small ribosomal subunit, and subsequent scanning for the initiator codon. The polypeptide is Eukaryotic initiation factor 4A-2 (TIF4A-2) (Arabidopsis thaliana (Mouse-ear cress)).